A 120-amino-acid polypeptide reads, in one-letter code: NAD(P)H-quinone oxidoreductase subunit 3 (120 aa).

Helical transmembrane passes span 6–26, 64–84, and 89–109; these read GYEY…LALT, MFAL…PWAV, and LGLL…VALA.

It belongs to the complex I subunit 3 family. NDH-1 can be composed of about 15 different subunits; different subcomplexes with different compositions have been identified which probably have different functions.

It localises to the cellular thylakoid membrane. It carries out the reaction a plastoquinone + NADH + (n+1) H(+)(in) = a plastoquinol + NAD(+) + n H(+)(out). The enzyme catalyses a plastoquinone + NADPH + (n+1) H(+)(in) = a plastoquinol + NADP(+) + n H(+)(out). Its function is as follows. NDH-1 shuttles electrons from an unknown electron donor, via FMN and iron-sulfur (Fe-S) centers, to quinones in the respiratory and/or the photosynthetic chain. The immediate electron acceptor for the enzyme in this species is believed to be plastoquinone. Couples the redox reaction to proton translocation, and thus conserves the redox energy in a proton gradient. Cyanobacterial NDH-1 also plays a role in inorganic carbon-concentration. This chain is NAD(P)H-quinone oxidoreductase subunit 3, found in Prochlorococcus marinus (strain NATL1A).